Here is a 285-residue protein sequence, read N- to C-terminus: Involucrin (285 aa).

3 disordered regions span residues 1–93 (MSQQ…QEQK), 120–256 (LEQQ…AQVQ), and 266–285 (LPLI…PEHQ). A compositionally biased stretch (polar residues) spans 27–39 (IDTQQEQVKQPTS). Composition is skewed to low complexity over residues 72-87 (EQQC…QKQQ), 120-129 (LEQQQEQQES), and 137-147 (EQCLEQQQEQQ). 3 stretches are compositionally biased toward basic and acidic residues: residues 149–165 (SQEK…KEEL), 175–185 (EQCEKHQEAKN), and 200–233 (QQKE…KEEQ). Residues 235–248 (LEQQGQQEGQLEQP) are compositionally biased toward low complexity. The segment covering 272–285 (QHQKQEVHDPPEHQ) has biased composition (basic and acidic residues).

Belongs to the involucrin family. Directly or indirectly cross-linked to cornifelin (CNFN). Post-translationally, substrate of transglutaminase. Specific glutamines or lysines are cross-linked to keratins, desmoplakin and to inter involucrin molecules. Keratinocytes of epidermis and other stratified squamous epithelia.

It is found in the cytoplasm. Part of the insoluble cornified cell envelope (CE) of stratified squamous epithelia. In Canis lupus familiaris (Dog), this protein is Involucrin (IVL).